Reading from the N-terminus, the 125-residue chain is Succinate dehydrogenase assembly factor 3, mitochondrial (125 aa).

Residues methionine 1 to leucine 30 constitute a mitochondrion transit peptide.

The protein belongs to the complex I LYR family. SDHAF3 subfamily. In terms of assembly, interacts with Sdhb within an Sdha-Sdhb subcomplex.

Its subcellular location is the mitochondrion matrix. Its function is as follows. Plays an essential role in the assembly of succinate dehydrogenase (SDH), an enzyme complex (also referred to as respiratory complex II) that is a component of both the tricarboxylic acid (TCA) cycle and the mitochondrial electron transport chain, and which couples the oxidation of succinate to fumarate with the reduction of ubiquinone (coenzyme Q) to ubiquinol. Promotes maturation of the iron-sulfur protein subunit Sdhb of the SDH catalytic dimer, protecting it from the deleterious effects of oxidants. May act together with SDHAF1. In Mus musculus (Mouse), this protein is Succinate dehydrogenase assembly factor 3, mitochondrial.